A 68-amino-acid chain; its full sequence is MKYLNTTDCSLFLAERSKFMTKYALIGLLAVCATVLCFSLIFRERLCELNIHRGNTVVQVTLAYEARK.

A helical membrane pass occupies residues 23 to 42 (YALIGLLAVCATVLCFSLIF).

It belongs to the Hok/Gef family.

The protein localises to the cell inner membrane. Functionally, toxic component of a type I toxin-antitoxin (TA) system. Its normal function is believed to be effective plasmid stabilization through postsegregational killing of cells that have lost the F plasmid. Promotes degradation of stable RNA in E.coli. The protein is Protein SrnB (srnB) of Escherichia coli (strain K12).